A 408-amino-acid polypeptide reads, in one-letter code: Serine/threonine transporter SstT (408 aa).

9 helical membrane passes run 11-31 (LANG…VILA), 43-63 (FLGS…VFIL), 81-101 (PIVV…VVLS), 141-161 (ALMT…GLAL), 192-212 (IGIF…AIAG), 216-236 (LLAV…PLIV), 298-318 (MGGA…TLGI), 330-350 (VVAA…LLLI), and 357-377 (FGIS…IGVI).

The protein belongs to the dicarboxylate/amino acid:cation symporter (DAACS) (TC 2.A.23) family.

It is found in the cell inner membrane. The enzyme catalyses L-serine(in) + Na(+)(in) = L-serine(out) + Na(+)(out). It carries out the reaction L-threonine(in) + Na(+)(in) = L-threonine(out) + Na(+)(out). In terms of biological role, involved in the import of serine and threonine into the cell, with the concomitant import of sodium (symport system). In Shewanella sp. (strain W3-18-1), this protein is Serine/threonine transporter SstT.